A 142-amino-acid chain; its full sequence is Small ribosomal subunit protein uS12 (142 aa).

The protein belongs to the universal ribosomal protein uS12 family. As to quaternary structure, part of the 30S ribosomal subunit.

Functionally, with S4 and S5 plays an important role in translational accuracy. Located at the interface of the 30S and 50S subunits. The polypeptide is Small ribosomal subunit protein uS12 (Thermoplasma acidophilum (strain ATCC 25905 / DSM 1728 / JCM 9062 / NBRC 15155 / AMRC-C165)).